The primary structure comprises 322 residues: Myeloid-associated differentiation marker (322 aa).

Positions 1–18 (MPVTVTRTTITTTTTSSS) are enriched in low complexity. Residues 1–21 (MPVTVTRTTITTTTTSSSGLG) form a disordered region. Residue serine 22 is modified to Phosphoserine. MARVEL domains are found at residues 31 to 163 (ALTQ…ARPG) and 168 to 319 (YMAT…HLVF). Transmembrane regions (helical) follow at residues 41–61 (LLQLVSTCVAFSLVASVGAWT), 70–90 (FTWCFCFSVTLIILIVELCGL), 101–121 (FPITFACYAALFCLSASIIYP), 137–157 (AIAATFFSCIACVAYATEVAW), 171–191 (TVPGLLKVLETFVACIIFAFI), 203–223 (LEWCVAVYAICFILAAIAILL), 239–259 (FLSGLALLSVLLYATALVLWP), and 294–314 (LAVAILTAINLLAYVADLVHS).

This sequence belongs to the MAL family. In terms of tissue distribution, widely expressed. Not detected in thymus.

Its subcellular location is the membrane. The polypeptide is Myeloid-associated differentiation marker (MYADM) (Homo sapiens (Human)).